The following is a 101-amino-acid chain: MRKKRLLSRISFSSLFLLCGTLLSACTGIQADLRNLIKETTGKDIDLSKAIKTKEGKKNIIASLKKSYEVNPRDTTKLLLDAWKQSFEEGKLGIPDFDLTM.

The N-terminal stretch at M1–A25 is a signal peptide. C26 carries N-palmitoyl cysteine lipidation. The S-diacylglycerol cysteine moiety is linked to residue C26.

It belongs to the MG439/MG440 family.

Its subcellular location is the cell membrane. This is an uncharacterized protein from Mycoplasma pneumoniae (strain ATCC 29342 / M129 / Subtype 1) (Mycoplasmoides pneumoniae).